The primary structure comprises 964 residues: Integrator complex subunit 7 (964 aa).

Positions Q937–N958 are enriched in low complexity. The interval Q937–Q964 is disordered.

It belongs to the Integrator subunit 7 family. Component of the Integrator complex, composed of core subunits INTS1, INTS2, INTS3, INTS4, INTS5, INTS6, INTS7, INTS8, INTS9/RC74, INTS10, INTS11/CPSF3L, INTS12, INTS13, INTS14 and INTS15. The core complex associates with protein phosphatase 2A subunits PPP2CA and PPP2R1A, to form the Integrator-PP2A (INTAC) complex.

The protein resides in the nucleus. The protein localises to the chromosome. Its subcellular location is the cytoplasm. In terms of biological role, component of the integrator complex, a multiprotein complex that terminates RNA polymerase II (Pol II) transcription in the promoter-proximal region of genes. The integrator complex provides a quality checkpoint during transcription elongation by driving premature transcription termination of transcripts that are unfavorably configured for transcriptional elongation: the complex terminates transcription by (1) catalyzing dephosphorylation of the C-terminal domain (CTD) of Pol II subunit POLR2A/RPB1 and SUPT5H/SPT5, (2) degrading the exiting nascent RNA transcript via endonuclease activity and (3) promoting the release of Pol II from bound DNA. The integrator complex is also involved in terminating the synthesis of non-coding Pol II transcripts, such as enhancer RNAs (eRNAs), small nuclear RNAs (snRNAs), telomerase RNAs and long non-coding RNAs (lncRNAs). Essential during embryogenesis for eye development. This chain is Integrator complex subunit 7 (ints7), found in Danio rerio (Zebrafish).